We begin with the raw amino-acid sequence, 128 residues long: Aspartate 1-decarboxylase (128 aa).

Catalysis depends on Ser-25, which acts as the Schiff-base intermediate with substrate; via pyruvic acid. Ser-25 is modified (pyruvic acid (Ser)). A substrate-binding site is contributed by Thr-57. The active-site Proton donor is Tyr-58. Position 73–75 (Gly-73–Ala-75) interacts with substrate.

Belongs to the PanD family. In terms of assembly, heterooctamer of four alpha and four beta subunits. It depends on pyruvate as a cofactor. In terms of processing, is synthesized initially as an inactive proenzyme, which is activated by self-cleavage at a specific serine bond to produce a beta-subunit with a hydroxyl group at its C-terminus and an alpha-subunit with a pyruvoyl group at its N-terminus.

Its subcellular location is the cytoplasm. The catalysed reaction is L-aspartate + H(+) = beta-alanine + CO2. Its pathway is cofactor biosynthesis; (R)-pantothenate biosynthesis; beta-alanine from L-aspartate: step 1/1. In terms of biological role, catalyzes the pyruvoyl-dependent decarboxylation of aspartate to produce beta-alanine. The polypeptide is Aspartate 1-decarboxylase (Burkholderia multivorans (strain ATCC 17616 / 249)).